Reading from the N-terminus, the 229-residue chain is Potassium/proton antiporter CemA (229 aa).

The next 2 membrane-spanning stretches (helical) occupy residues 7 to 27 (FTPLFYLASIVFLPWWISFSV) and 107 to 127 (ILHFSTNIIWFGILSGYSILG).

Belongs to the CemA family.

The protein resides in the plastid. Its subcellular location is the chloroplast inner membrane. It catalyses the reaction K(+)(in) + H(+)(out) = K(+)(out) + H(+)(in). Contributes to K(+)/H(+) antiport activity by supporting proton efflux to control proton extrusion and homeostasis in chloroplasts in a light-dependent manner to modulate photosynthesis. Prevents excessive induction of non-photochemical quenching (NPQ) under continuous-light conditions. Indirectly promotes efficient inorganic carbon uptake into chloroplasts. The polypeptide is Potassium/proton antiporter CemA (Solanum tuberosum (Potato)).